Reading from the N-terminus, the 296-residue chain is Sulfotransferase 1E1 (296 aa).

49–54 is a 3'-phosphoadenylyl sulfate binding site; that stretch reads KSGTTW. 107 to 109 contacts substrate; that stretch reads KTH. His109 (proton acceptor) is an active-site residue. Residues Arg131, Ser139, Tyr194, 228–233, and 258–260 each bind 3'-phosphoadenylyl sulfate; these read TSFQEM and RKG.

This sequence belongs to the sulfotransferase 1 family. In terms of assembly, homodimer. In terms of processing, the N-terminus is blocked. In terms of tissue distribution, adrenal gland and much less in liver. Detectable only during pregnancy in uterine.

It localises to the cytoplasm. The protein resides in the cytosol. It catalyses the reaction estrone + 3'-phosphoadenylyl sulfate = estrone 3-sulfate + adenosine 3',5'-bisphosphate + H(+). It carries out the reaction (24S)-hydroxycholesterol + 3'-phosphoadenylyl sulfate = (24S)-hydroxycholesterol 3-sulfate + adenosine 3',5'-bisphosphate + H(+). The enzyme catalyses 17beta-estradiol + 3'-phosphoadenylyl sulfate = 17beta-estradiol 3-sulfate + adenosine 3',5'-bisphosphate + H(+). The catalysed reaction is 3beta-hydroxyandrost-5-en-17-one + 3'-phosphoadenylyl sulfate = dehydroepiandrosterone 3-sulfate + adenosine 3',5'-bisphosphate + H(+). It catalyses the reaction 4-ethylphenol + 3'-phosphoadenylyl sulfate = 4-ethylphenyl sulfate + adenosine 3',5'-bisphosphate + H(+). With respect to regulation, inhibited by estradiol. Functionally, sulfotransferase that utilizes 3'-phospho-5'-adenylyl sulfate (PAPS) as sulfonate donor to catalyze the sulfate conjugation of estradiol and estrone. Is a key enzyme in estrogen homeostasis, the sulfation of estrogens leads to their inactivation. Also sulfates dehydroepiandrosterone (DHEA), pregnenolone, (24S)-hydroxycholesteroland xenobiotic compounds like ethinylestradiol, equalenin, diethyl stilbesterol and 1-naphthol at significantly lower efficiency. Does not sulfonate cortisol, testosterone and dopamine. May play a role in gut microbiota-host metabolic interaction. O-sulfonates 4-ethylphenol (4-EP), a dietary tyrosine-derived metabolite produced by gut bacteria. The product 4-EPS crosses the blood-brain barrier and may negatively regulate oligodendrocyte maturation and myelination, affecting the functional connectivity of different brain regions associated with the limbic system. This chain is Sulfotransferase 1E1 (SULT1E1), found in Cavia porcellus (Guinea pig).